The following is a 192-amino-acid chain: Ras-like protein RAS2 (192 aa).

Position 15 to 22 (15 to 22) interacts with GTP; that stretch reads GGGGVGKS. An Effector region motif is present at residues 37-45; it reads YDPTIEDSY. Residues 62 to 66 and 121 to 124 each bind GTP; these read DTAGQ and NKSD. C189 bears the Cysteine methyl ester mark. C189 carries S-geranylgeranyl cysteine lipidation. Residues 190–192 constitute a propeptide, removed in mature form; sequence IVL.

This sequence belongs to the small GTPase superfamily. Ras family.

It localises to the cell membrane. The catalysed reaction is GTP + H2O = GDP + phosphate + H(+). With respect to regulation, alternates between an inactive form bound to GDP and an active form bound to GTP. Activated by a guanine nucleotide-exchange factor (GEF) and inactivated by a GTPase-activating protein (GAP). In terms of biological role, ras proteins bind GDP/GTP and possess intrinsic GTPase activity. In Hydra vulgaris (Hydra), this protein is Ras-like protein RAS2 (RAS2).